Reading from the N-terminus, the 74-residue chain is Sec-independent protein translocase protein TatA (74 aa).

The chain crosses the membrane as a helical span at residues 1–21 (MGSMSWIHWVIVLGIVALLFG). The interval 51-74 (EVADNKAKSALPRTEAEAEELRKS) is disordered. The span at 64-74 (TEAEAEELRKS) shows a compositional bias: basic and acidic residues.

This sequence belongs to the TatA/E family. The Tat system comprises two distinct complexes: a TatABC complex, containing multiple copies of TatA, TatB and TatC subunits, and a separate TatA complex, containing only TatA subunits. Substrates initially bind to the TatABC complex, which probably triggers association of the separate TatA complex to form the active translocon.

Its subcellular location is the cell inner membrane. Part of the twin-arginine translocation (Tat) system that transports large folded proteins containing a characteristic twin-arginine motif in their signal peptide across membranes. TatA could form the protein-conducting channel of the Tat system. The polypeptide is Sec-independent protein translocase protein TatA (Caulobacter vibrioides (strain ATCC 19089 / CIP 103742 / CB 15) (Caulobacter crescentus)).